The primary structure comprises 240 residues: MIENWHRGFVLHRREYSETSLLVDFFTEEHGRITLLAKGARRPRSPLKAVLQPFTPLLLRWSGKGDLKTLTKAEPASLTLPMQTLALYSGFYVNEVLARVLENQTAYPELFQHYLQCMTRLATQPEQIEPILRTFEFQMLKALGYGVNFSICAATGDPVSPSMTYQFKENEGFIASLLRNNASFLGKDLLAFEQLDFSDKATLQAAKRFTRMALKPYLGSQPLKSRELFQSILPNKLKSG.

Belongs to the RecO family.

In terms of biological role, involved in DNA repair and RecF pathway recombination. The protein is DNA repair protein RecO of Actinobacillus pleuropneumoniae serotype 7 (strain AP76).